A 408-amino-acid polypeptide reads, in one-letter code: Tyrosine--tRNA ligase (408 aa).

The short motif at 50-59 (PTGKDLTLGH) is the 'HIGH' region element. Residues 234 to 238 (KMSKS) carry the 'KMSKS' region motif. ATP is bound at residue K237. The S4 RNA-binding domain occupies 346–407 (MQAARVLFTA…GKRKYGRVVL (62 aa)).

This sequence belongs to the class-I aminoacyl-tRNA synthetase family. TyrS type 2 subfamily. Homodimer.

Its subcellular location is the cytoplasm. The enzyme catalyses tRNA(Tyr) + L-tyrosine + ATP = L-tyrosyl-tRNA(Tyr) + AMP + diphosphate + H(+). Catalyzes the attachment of tyrosine to tRNA(Tyr) in a two-step reaction: tyrosine is first activated by ATP to form Tyr-AMP and then transferred to the acceptor end of tRNA(Tyr). The sequence is that of Tyrosine--tRNA ligase from Symbiobacterium thermophilum (strain DSM 24528 / JCM 14929 / IAM 14863 / T).